The sequence spans 34 residues: Photosystem II reaction center protein M (34 aa).

The chain crosses the membrane as a helical span at residues 5-25 (ILGLTATALFIIIPTSFLLIL).

Belongs to the PsbM family. PSII is composed of 1 copy each of membrane proteins PsbA, PsbB, PsbC, PsbD, PsbE, PsbF, PsbH, PsbI, PsbJ, PsbK, PsbL, PsbM, PsbT, PsbX, PsbY, PsbZ, Psb30/Ycf12, at least 3 peripheral proteins of the oxygen-evolving complex and a large number of cofactors. It forms dimeric complexes.

The protein localises to the plastid. It localises to the chloroplast thylakoid membrane. In terms of biological role, one of the components of the core complex of photosystem II (PSII). PSII is a light-driven water:plastoquinone oxidoreductase that uses light energy to abstract electrons from H(2)O, generating O(2) and a proton gradient subsequently used for ATP formation. It consists of a core antenna complex that captures photons, and an electron transfer chain that converts photonic excitation into a charge separation. This subunit is found at the monomer-monomer interface. The sequence is that of Photosystem II reaction center protein M from Stigeoclonium helveticum (Green alga).